The following is a 290-amino-acid chain: MFKGSIVAIVTPFTNGAVDQEKLRELVEFQITNGTDAIVPCGTTGESSTLDYDEHMDVVKIVIEQVNKRVPVIAGTGSNSTAEAIELSRKAKEAGADGVLLVTPYYNKPTQEGLVRHYTAIADAVAIPQILYNVPGRTGVNMLPETVARLAPHKNIVAIKEATGSLQQASEILALCGDQIDVLSGDDFITFPMMACGAKGVISVLANIMPKAVADLTDAFFAGDLETARRLHLNTLKISNAMFIESNPIPVKTALGLMGKCSDEVRLPLCPMSEGNKAKLTAIMKEYQLI.

Threonine 44 is a binding site for pyruvate. The Proton donor/acceptor role is filled by tyrosine 132. Lysine 160 functions as the Schiff-base intermediate with substrate in the catalytic mechanism. Position 202 (isoleucine 202) interacts with pyruvate.

This sequence belongs to the DapA family. In terms of assembly, homotetramer; dimer of dimers.

It is found in the cytoplasm. The catalysed reaction is L-aspartate 4-semialdehyde + pyruvate = (2S,4S)-4-hydroxy-2,3,4,5-tetrahydrodipicolinate + H2O + H(+). The protein operates within amino-acid biosynthesis; L-lysine biosynthesis via DAP pathway; (S)-tetrahydrodipicolinate from L-aspartate: step 3/4. Catalyzes the condensation of (S)-aspartate-beta-semialdehyde [(S)-ASA] and pyruvate to 4-hydroxy-tetrahydrodipicolinate (HTPA). This chain is 4-hydroxy-tetrahydrodipicolinate synthase, found in Geobacter sulfurreducens (strain ATCC 51573 / DSM 12127 / PCA).